The chain runs to 377 residues: Chaperone protein DnaJ 1 (377 aa).

One can recognise a J domain in the interval aspartate 4 to glycine 68. The CR-type zinc finger occupies glycine 136–threonine 218. Zn(2+) is bound by residues cysteine 149, cysteine 152, cysteine 166, cysteine 169, cysteine 192, cysteine 195, cysteine 206, and cysteine 209. CXXCXGXG motif repeat units lie at residues cysteine 149–glycine 156, cysteine 166–glycine 173, cysteine 192–glycine 199, and cysteine 206–glycine 213.

Belongs to the DnaJ family. As to quaternary structure, homodimer. Zn(2+) serves as cofactor.

It is found in the cytoplasm. Its function is as follows. Participates actively in the response to hyperosmotic and heat shock by preventing the aggregation of stress-denatured proteins and by disaggregating proteins, also in an autonomous, DnaK-independent fashion. Unfolded proteins bind initially to DnaJ; upon interaction with the DnaJ-bound protein, DnaK hydrolyzes its bound ATP, resulting in the formation of a stable complex. GrpE releases ADP from DnaK; ATP binding to DnaK triggers the release of the substrate protein, thus completing the reaction cycle. Several rounds of ATP-dependent interactions between DnaJ, DnaK and GrpE are required for fully efficient folding. Also involved, together with DnaK and GrpE, in the DNA replication of plasmids through activation of initiation proteins. The polypeptide is Chaperone protein DnaJ 1 (Synechocystis sp. (strain ATCC 27184 / PCC 6803 / Kazusa)).